We begin with the raw amino-acid sequence, 469 residues long: E3 ubiquitin-protein ligase pellino homolog 3 (469 aa).

Positions 1–39 (MVLEGNPEVGSPRTSDLQHRGNKGSCVLSSPGEDAQPGE) are disordered. Serine 11 carries the post-translational modification Phosphoserine.

Belongs to the pellino family. In terms of assembly, interacts with TRAF6, MAP3K14 and MAP3K7. Phosphorylated by IRAK1 enhancing its E3 ligase activity. Highly expressed in brain, heart and testis, and at lower level in kidney, liver, lung, placenta, small intestine, spleen and stomach. Isoform 1 is not expressed in lung.

It catalyses the reaction S-ubiquitinyl-[E2 ubiquitin-conjugating enzyme]-L-cysteine + [acceptor protein]-L-lysine = [E2 ubiquitin-conjugating enzyme]-L-cysteine + N(6)-ubiquitinyl-[acceptor protein]-L-lysine.. It functions in the pathway protein modification; protein ubiquitination. Its function is as follows. E3 ubiquitin ligase catalyzing the covalent attachment of ubiquitin moieties onto substrate proteins. Involved in the TLR and IL-1 signaling pathways via interaction with the complex containing IRAK kinases and TRAF6. Mediates 'Lys-63'-linked polyubiquitination of IRAK1. Can activate AP1/JUN and ELK1. Acts as a regulator of innate immunity by mediating 'Lys-63'-linked polyubiquitination of RIPK2 downstream of NOD1 and NOD2, thereby transforming RIPK2 into a scaffolding protein for downstream effectors, ultimately leading to activation of the NF-kappa-B and MAP kinases signaling. Catalyzes 'Lys-63'-linked polyubiquitination of RIPK2 in parallel of XIAP. The polypeptide is E3 ubiquitin-protein ligase pellino homolog 3 (Homo sapiens (Human)).